Reading from the N-terminus, the 21-residue chain is Protein YadW (21 aa).

The protein is Protein YadW of Escherichia coli (strain K12).